The primary structure comprises 266 residues: Syntaxin-71 (266 aa).

Topologically, residues 1–243 (MTVIDILTRV…TVNQLRSSRN (243 aa)) are cytoplasmic. Ser-12 is subject to Phosphoserine. A coiled-coil region spans residues 44–87 (ETQIETALEKAELVTKEKNRAAAVAMNAEIRRTKARLSEEVPKL). Residues 122 to 146 (DGTAGGPKSTSAWTPSSTTSRPDIK) form a disordered region. Residues 130–141 (STSAWTPSSTTS) are compositionally biased toward low complexity. In terms of domain architecture, t-SNARE coiled-coil homology spans 172–234 (EMRKIKQEQG…KNTNVRLKDT (63 aa)). Residues 244-264 (FCIDIVLLCIVLGIAAYLYNV) traverse the membrane as a helical; Anchor for type IV membrane protein segment. The Vesicular segment spans residues 265–266 (LK).

This sequence belongs to the syntaxin family. As to quaternary structure, part of the t-SNARE complex. Expressed in root, leaf, stem, flower and silique.

It is found in the membrane. Functionally, vesicle trafficking protein that functions in the secretory pathway. The chain is Syntaxin-71 (SYP71) from Arabidopsis thaliana (Mouse-ear cress).